The sequence spans 267 residues: L-aspartate dehydrogenase (267 aa).

2 residues coordinate NAD(+): A124 and N190. H218 is an active-site residue.

It belongs to the L-aspartate dehydrogenase family.

The catalysed reaction is L-aspartate + NADP(+) + H2O = oxaloacetate + NH4(+) + NADPH + H(+). It catalyses the reaction L-aspartate + NAD(+) + H2O = oxaloacetate + NH4(+) + NADH + H(+). Its pathway is cofactor biosynthesis; NAD(+) biosynthesis; iminoaspartate from L-aspartate (dehydrogenase route): step 1/1. Specifically catalyzes the NAD or NADP-dependent dehydrogenation of L-aspartate to iminoaspartate. In Methanocaldococcus jannaschii (strain ATCC 43067 / DSM 2661 / JAL-1 / JCM 10045 / NBRC 100440) (Methanococcus jannaschii), this protein is L-aspartate dehydrogenase.